Reading from the N-terminus, the 427-residue chain is Ribosome biogenesis protein WDR12 homolog (427 aa).

Positions 13 to 97 (LQLHLYTKQK…EDTVELEYVE (85 aa)) are ubiquitin-like (UBL) domain. WD repeat units lie at residues 109 to 146 (LHDDWVSAVEAKDNWILTGCYDNTLNIWTTKGKHKLTI), 148 to 190 (GHIA…NSVE), 197 to 236 (GHERGVDCIAANRSKTRMATGSWDTMLKIWSTDVRNDGDS), 260 to 298 (GHRECISGVQWIDDNTLVTSSWDHTIKIWDLALSGIKSE), 301 to 339 (GHKSFFDLSYSHLNGLIIAASPDKNLRLYDPKSNQGTIV), 345 to 385 (GHTQ…APIF), and 389 to 427 (GHEDKVLACDWSNPKFILSGGSDNSVRVFKSKIAIGEQK).

The protein belongs to the WD repeat WDR12/YTM1 family.

The protein resides in the nucleus. Its subcellular location is the nucleolus. It is found in the nucleoplasm. Functionally, required for maturation of ribosomal RNAs and formation of the large ribosomal subunit. The polypeptide is Ribosome biogenesis protein WDR12 homolog (Aedes aegypti (Yellowfever mosquito)).